Consider the following 165-residue polypeptide: Fatty acid-binding protein homolog 3 (165 aa).

The first 19 residues, 1–19, serve as a signal peptide directing secretion; the sequence is MNLYLTLFSFCFLAIMAEA.

The protein belongs to the calycin superfamily. Fatty-acid binding protein (FABP) family. As to expression, expressed in presumptive hypodermal cells by the comma stage and in posterior body wall muscle cells by the two-fold stage. From L1 to adult stages, expression continues in body wall muscle cells adjacent to the pseudocoelom, while hypodermal expression is extinguished.

It localises to the secreted. May play a role in sequestering potentially toxic fatty acids and their peroxidation products, or it may be involved in the maintenance of the impermeable lipid layer of the eggshell. This is Fatty acid-binding protein homolog 3 (lbp-3) from Caenorhabditis elegans.